Consider the following 261-residue polypeptide: Undecaprenyl-diphosphatase (261 aa).

8 consecutive transmembrane segments (helical) span residues 9-31 (ALLL…GHLT), 46-66 (FLKT…LLLY), 80-100 (IAVA…LIKG), 102-122 (ILGN…VLLF), 137-157 (ALPL…ALFP), 180-200 (AEFS…YDLW), 209-229 (GGWS…LVTV), and 240-260 (GFRP…FFFL).

The protein belongs to the UppP family.

The protein localises to the cell inner membrane. The enzyme catalyses di-trans,octa-cis-undecaprenyl diphosphate + H2O = di-trans,octa-cis-undecaprenyl phosphate + phosphate + H(+). Functionally, catalyzes the dephosphorylation of undecaprenyl diphosphate (UPP). Confers resistance to bacitracin. In Thermus thermophilus (strain ATCC 27634 / DSM 579 / HB8), this protein is Undecaprenyl-diphosphatase.